The sequence spans 356 residues: 1-deoxy-D-xylulose 5-phosphate reductoisomerase (356 aa).

The NADPH site is built by Thr-7, Gly-8, Ser-9, Ile-10, Gly-31, Asn-33, and Asn-111. Lys-112 contributes to the 1-deoxy-D-xylulose 5-phosphate binding site. An NADPH-binding site is contributed by Glu-113. Mn(2+) is bound at residue Asp-131. 1-deoxy-D-xylulose 5-phosphate is bound by residues Ser-132, Glu-133, Ser-155, and His-178. Glu-133 serves as a coordination point for Mn(2+). Gly-184 is an NADPH binding site. Ser-191, Asn-196, Lys-197, and Glu-200 together coordinate 1-deoxy-D-xylulose 5-phosphate. Position 200 (Glu-200) interacts with Mn(2+).

The protein belongs to the DXR family. Requires Mg(2+) as cofactor. Mn(2+) is required as a cofactor.

It catalyses the reaction 2-C-methyl-D-erythritol 4-phosphate + NADP(+) = 1-deoxy-D-xylulose 5-phosphate + NADPH + H(+). It participates in isoprenoid biosynthesis; isopentenyl diphosphate biosynthesis via DXP pathway; isopentenyl diphosphate from 1-deoxy-D-xylulose 5-phosphate: step 1/6. In terms of biological role, catalyzes the NADPH-dependent rearrangement and reduction of 1-deoxy-D-xylulose-5-phosphate (DXP) to 2-C-methyl-D-erythritol 4-phosphate (MEP). In Campylobacter jejuni subsp. jejuni serotype O:23/36 (strain 81-176), this protein is 1-deoxy-D-xylulose 5-phosphate reductoisomerase.